Consider the following 141-residue polypeptide: Ribonuclease VapC2 (141 aa).

The 123-residue stretch at 7–129 folds into the PINc domain; that stretch reads LIDKSALVRL…FDAIAALTGQ (123 aa). D99, D117, and D119 together coordinate Mg(2+).

It belongs to the PINc/VapC protein family. In terms of assembly, probably active as a homodimer. Requires Mg(2+) as cofactor.

Toxic component of a type II toxin-antitoxin (TA) system. Acts as an RNase. All its toxic effects are neutralized by coexpression with cognate antitoxin VapB2. This Mycobacterium tuberculosis (strain CDC 1551 / Oshkosh) protein is Ribonuclease VapC2.